The chain runs to 348 residues: NADH-quinone oxidoreductase subunit H (348 aa).

8 helical membrane passes run Ile-21–Val-41, Gly-87–Ile-107, Val-120–Gly-140, Ile-166–Val-186, Gly-195–Ile-215, Asn-258–Ile-278, Gly-288–Ala-308, and Val-325–Gly-345.

Belongs to the complex I subunit 1 family. As to quaternary structure, NDH-1 is composed of 14 different subunits. Subunits NuoA, H, J, K, L, M, N constitute the membrane sector of the complex.

It is found in the cell inner membrane. It carries out the reaction a quinone + NADH + 5 H(+)(in) = a quinol + NAD(+) + 4 H(+)(out). Functionally, NDH-1 shuttles electrons from NADH, via FMN and iron-sulfur (Fe-S) centers, to quinones in the respiratory chain. The immediate electron acceptor for the enzyme in this species is believed to be ubiquinone. Couples the redox reaction to proton translocation (for every two electrons transferred, four hydrogen ions are translocated across the cytoplasmic membrane), and thus conserves the redox energy in a proton gradient. This subunit may bind ubiquinone. In Erythrobacter litoralis (strain HTCC2594), this protein is NADH-quinone oxidoreductase subunit H.